Consider the following 238-residue polypeptide: MAIISMKQLLEAGVHFGHQTRRWNPKMAPYIFTERNGIYIIDLQRTVKKIEEAYNFIRDLSRDGGKVLFVGTKKQAQESVKEEAERCGMFYVNVRWLGGTLTNFQTIRRRIERLKELERMEEEGTFDLLPKKEVAHLRGEREKLERFLGGIKEMKSLPDALFIIDPRKERIAVAEGRRLGIPIVAIVDTNCDPDEIDYVIPGNDDAIRAVRLLTSKMADAVIEGQQGQDQPEEEAVVE.

This sequence belongs to the universal ribosomal protein uS2 family.

This Moorella thermoacetica (strain ATCC 39073 / JCM 9320) protein is Small ribosomal subunit protein uS2.